Reading from the N-terminus, the 94-residue chain is Integration host factor subunit beta (94 aa).

This sequence belongs to the bacterial histone-like protein family. As to quaternary structure, heterodimer of an alpha and a beta chain.

In terms of biological role, this protein is one of the two subunits of integration host factor, a specific DNA-binding protein that functions in genetic recombination as well as in transcriptional and translational control. This is Integration host factor subunit beta (ihfB) from Dickeya dadantii (strain 3937) (Erwinia chrysanthemi (strain 3937)).